We begin with the raw amino-acid sequence, 317 residues long: Beta-ketoacyl-[acyl-carrier-protein] synthase III (317 aa).

Active-site residues include Cys-112 and His-244. The tract at residues 245–249 is ACP-binding; sequence QANLR. Asn-274 is a catalytic residue.

Belongs to the thiolase-like superfamily. FabH family. As to quaternary structure, homodimer.

It localises to the cytoplasm. It catalyses the reaction malonyl-[ACP] + acetyl-CoA + H(+) = 3-oxobutanoyl-[ACP] + CO2 + CoA. The protein operates within lipid metabolism; fatty acid biosynthesis. Catalyzes the condensation reaction of fatty acid synthesis by the addition to an acyl acceptor of two carbons from malonyl-ACP. Catalyzes the first condensation reaction which initiates fatty acid synthesis and may therefore play a role in governing the total rate of fatty acid production. Possesses both acetoacetyl-ACP synthase and acetyl transacylase activities. Its substrate specificity determines the biosynthesis of branched-chain and/or straight-chain of fatty acids. This is Beta-ketoacyl-[acyl-carrier-protein] synthase III from Baumannia cicadellinicola subsp. Homalodisca coagulata.